We begin with the raw amino-acid sequence, 37 residues long: Large ribosomal subunit protein bL36c (37 aa).

This sequence belongs to the bacterial ribosomal protein bL36 family.

The protein localises to the plastid. Its subcellular location is the chloroplast. This chain is Large ribosomal subunit protein bL36c, found in Chloranthus spicatus (Chulantree).